The following is a 143-amino-acid chain: Small ribosomal subunit protein eS12 (143 aa).

This sequence belongs to the eukaryotic ribosomal protein eS12 family.

This Hordeum vulgare (Barley) protein is Small ribosomal subunit protein eS12 (RPS12).